Consider the following 838-residue polypeptide: Urease (838 aa).

Residues 400–838 (GAIDCHVHFI…VPLSRNYFLF (439 aa)) form the Urease domain. Positions 405, 407, and 488 each coordinate Ni(2+). K488 is modified (N6-carboxylysine). H490 contributes to the substrate binding site. Residues H517 and H543 each coordinate Ni(2+). H591 (proton donor) is an active-site residue. A Ni(2+)-binding site is contributed by D631.

In the C-terminal section; belongs to the metallo-dependent hydrolases superfamily. Urease alpha subunit family. In terms of assembly, homohexamer. Other oligomeric forms may exist depending on pH and presence of salts. Requires Ni(2+) as cofactor. In terms of processing, carboxylation allows a single lysine to coordinate two nickel ions.

It catalyses the reaction urea + 2 H2O + H(+) = hydrogencarbonate + 2 NH4(+). Its pathway is nitrogen metabolism; urea degradation; CO(2) and NH(3) from urea (urease route): step 1/1. Requires the three urease accessory proteins URED, UREF AND UREG for its activation. Urea hydrolase involved in nitrogen recycling from ureide, purine, and arginine catabolism. In Arabidopsis thaliana (Mouse-ear cress), this protein is Urease.